Reading from the N-terminus, the 427-residue chain is POU domain protein CF1A (427 aa).

Disordered stretches follow at residues tyrosine 39 to serine 77, histidine 196 to serine 217, threonine 288 to threonine 309, and histidine 390 to histidine 427. A compositionally biased stretch (low complexity) spans alanine 49–glycine 66. The segment covering glutamine 67–serine 77 has biased composition (gly residues). Positions glutamate 212–aspartate 286 constitute a POU-specific domain. A DNA-binding region (homeobox) is located at residues lysine 304–threonine 363.

Belongs to the POU transcription factor family. Class-3 subfamily. Coexpressed with acj6 in overlapping subsets of neurons in the embryonic epidermis and central nervous system. First detected in the precursor of the tracheal pits and the stomodeal invagination and later in the peripheral nervous system.

The protein resides in the nucleus. Functionally, binds to a DNA sequence element required for the expression of the dopa decarboxylase gene (Ddc) in specific dopaminergic neurons. Could also play an early role in specific ectodermal cells, and a subsequent role in the embryonic nervous system. In Drosophila melanogaster (Fruit fly), this protein is POU domain protein CF1A (vvl).